A 243-amino-acid polypeptide reads, in one-letter code: Triosephosphate isomerase (243 aa).

Position 9–11 (9–11) interacts with substrate; sequence NWK. The Electrophile role is filled by His-96. The active-site Proton acceptor is Glu-165. Substrate contacts are provided by residues Gly-171, Ser-204, and 225-226; that span reads GG.

The protein belongs to the triosephosphate isomerase family. In terms of assembly, homodimer.

The protein localises to the cytoplasm. The enzyme catalyses D-glyceraldehyde 3-phosphate = dihydroxyacetone phosphate. The protein operates within carbohydrate biosynthesis; gluconeogenesis. It participates in carbohydrate degradation; glycolysis; D-glyceraldehyde 3-phosphate from glycerone phosphate: step 1/1. Involved in the gluconeogenesis. Catalyzes stereospecifically the conversion of dihydroxyacetone phosphate (DHAP) to D-glyceraldehyde-3-phosphate (G3P). The chain is Triosephosphate isomerase from Synechococcus sp. (strain WH7803).